The primary structure comprises 442 residues: ATP-dependent RNA helicase SUB2 (442 aa).

The Q motif signature appears at 59-87 (TGFRDFLLKGELLRAITDCGFEHPSEVQQ). The 176-residue stretch at 90 to 265 (IPTAILNVDV…KKFMRNPLEV (176 aa)) folds into the Helicase ATP-binding domain. 103–110 (AKSGLGKT) contributes to the ATP binding site. The DECD box signature appears at 212 to 215 (DECD). The Helicase C-terminal domain maps to 293-438 (KLNELLDSLE…EYPQGGVDSS (146 aa)).

It belongs to the DEAD box helicase family. DECD subfamily.

The protein localises to the nucleus. It carries out the reaction ATP + H2O = ADP + phosphate + H(+). ATP-binding RNA helicase involved in transcription elongation and required for the export of mRNA out of the nucleus. SUB2 also plays a role in pre-mRNA splicing and spliceosome assembly. May be involved in rDNA and telomeric silencing, and maintenance of genome integrity. The chain is ATP-dependent RNA helicase SUB2 (SUB2) from Ajellomyces capsulatus (strain NAm1 / WU24) (Darling's disease fungus).